Reading from the N-terminus, the 233-residue chain is MTIGIIGAMEEEVELLKNSMPSVEEIVIGGAKFYVGEIAGKEVVLLESGIGKVNAALGTTLMADRFKPEVIINTGSAGGMAEGLAVGDVIISDRLAYGDVDVTEFGYTYGQVPRMPAFYQGDAVLLKKAETIYREYFAASENKAVYGLVVTNDSFIMRPDQHETIRTFFPDVKAVEMEAAAIAQVAYQFDIPFLIIRAISDLANQEATISFDEFIHLAAKQSATCIIELLKTI.

Glutamate 12 acts as the Proton acceptor in catalysis. Residues glycine 78, isoleucine 156, and 177 to 178 (ME) contribute to the substrate site. Aspartate 201 (proton donor) is an active-site residue.

It belongs to the PNP/UDP phosphorylase family. MtnN subfamily.

It catalyses the reaction S-adenosyl-L-homocysteine + H2O = S-(5-deoxy-D-ribos-5-yl)-L-homocysteine + adenine. It carries out the reaction S-methyl-5'-thioadenosine + H2O = 5-(methylsulfanyl)-D-ribose + adenine. The enzyme catalyses 5'-deoxyadenosine + H2O = 5-deoxy-D-ribose + adenine. Its pathway is amino-acid biosynthesis; L-methionine biosynthesis via salvage pathway; S-methyl-5-thio-alpha-D-ribose 1-phosphate from S-methyl-5'-thioadenosine (hydrolase route): step 1/2. In terms of biological role, catalyzes the irreversible cleavage of the glycosidic bond in both 5'-methylthioadenosine (MTA) and S-adenosylhomocysteine (SAH/AdoHcy) to adenine and the corresponding thioribose, 5'-methylthioribose and S-ribosylhomocysteine, respectively. Also cleaves 5'-deoxyadenosine, a toxic by-product of radical S-adenosylmethionine (SAM) enzymes, into 5-deoxyribose and adenine. The sequence is that of 5'-methylthioadenosine/S-adenosylhomocysteine nucleosidase from Listeria monocytogenes serotype 4b (strain CLIP80459).